The chain runs to 459 residues: Protein maelstrom (459 aa).

The HMG box DNA-binding region spans 2 to 69 (APKKHSGFMM…AQRAKRESSN (68 aa)). Residues 43 to 78 (NTQQRGPYNSGGKDANVAQRAKRESSNGHGQVDKAQ) form a disordered region. Positions 63 to 78 (AKRESSNGHGQVDKAQ) are enriched in basic and acidic residues.

Belongs to the maelstrom family. In terms of tissue distribution, in germaria and egg chambers, it is detected in the germline. In the germarium, it is in all regions, including region I where the germ cells are dividing. In early egg chambers, it is uniformly distributed throughout the nurse cells and oocyte but, by stage 5, it is most concentrated around the outer margins of the cells, closest to the periphery of the egg chamber. Level decreases in stages 5 and 6, but most noticeably in the oocyte, where protein level remains. No detectable protein from stage 8 onward (at protein level).

The protein localises to the cytoplasm. Its subcellular location is the nucleus. It localises to the perinuclear region. It is found in the cytoplasmic ribonucleoprotein granule. Functionally, involved both in the piRNA and miRNA metabolic processes. As a component of the meiotic nuage, plays a central role during oogenesis by repressing transposable elements and preventing their mobilization, which is essential for the germline integrity. Repression of transposable elements is mediated via the piRNA metabolic process, which mediates the repression of transposable elements during meiosis by forming complexes composed of piRNAs and Piwi proteins and governs the repression of transposons. As a nuclear component, it is required for proper differentiation in the germline stem cell (GSC) lineage by repressing microRNA-7 (miR-7), thereby acting as an indirect regulator of bag-of-marbles (Bam). Acts by binding to the promoter of miR-7 gene and repressing its expression; miR-7 repression alleviates the Bam repression by miR-7, thereby allowing differentiation in the germline stem cell (GSC) lineage. Indirectly required to position the microtubule organizing center in stage 2-6 oocytes. Involved in repression of long interspersed nuclear elements (LINEs) including HeT-A, I-element, TART and possibly mst40 LINEs; may have a role in production of piwi-interacting RNA (piRNA). This is Protein maelstrom from Drosophila melanogaster (Fruit fly).